A 251-amino-acid chain; its full sequence is Prothoracicostatic peptides (251 aa).

Residues 1 to 22 (MRKSARGQVCTEAGAGASGDWQ) are disordered. Positions 1-77 (MRKSARGQVC…GWQDLNSAWG (77 aa)) are excised as a propeptide. Tryptophan 89 is subject to Tryptophan amide. Positions 93–138 (GWNDMSSAWGKRGWNDMSSAWGKRGWNDMSSAWGKRGWNDMSSAWG) are excised as a propeptide. Tryptophan 152 carries the post-translational modification Tryptophan amide. Positions 156–187 (AAEPDYEEIDAAIEQLIPIQQLSDNERMEVPE) are excised as a propeptide. Tryptophan amide occurs at positions 198 and 228. The segment at 227 to 251 (MWGKRSAPDADAVDDDHESSARDEA) is disordered.

Prothoracicostatic peptide 5: Expressed in antennal lobe (AL), corpora cardiaca (CC), corpora allata (CA) and gnathal ganglion (GNG) (at protein level). Expression in AL detected in all animals, in CC, CA and GNG in most (at protein level). Prothoracicostatic peptide 6: Expressed in antennal lobe (AL), corpora cardiaca (CC), corpora allata (CA) and gnathal ganglion (GNG) (at protein level). Expression in AL detected in all animals, expression in GNG in most animals, in CA and CC detected in some animals (at protein level). Prothoracicostatic peptide 7: Expressed in antennal lobe (AL), corpora cardiaca (CC), corpora allata (CA) and gnathal ganglion (GNG) (at protein level). Expression in AL, CA and CC detected in most animals, expression in GNG in some animals (at protein level). Prothoracicostatic peptide precursor-related peptide 2: Expressed in antennal lobe (AL), corpora cardiaca (CC) and corpora allata (CA) with expression detected in few animals (at protein level). Not expressed in gnathal ganglion (GNG) (at protein level). Prothoracicostatic peptide 8: Expressed in antennal lobe (AL), corpora cardiaca (CC), corpora allata (CA) and gnathal ganglion (GNG) (at protein level). Expression in AL detected in all animals, expression in GNG in most animals, in CA and CC detected in some animals (at protein level). Prothoracicostatic peptide precursor-related peptide 3: Expressed in antennal lobe (AL) in few animals (at protein level). Not expressed in corpora cardiaca (CC), corpora allata (CA) and gnathal ganglion (GNG) (at protein level).

It localises to the secreted. The chain is Prothoracicostatic peptides from Agrotis ipsilon (Black cutworm moth).